Here is a 37-residue protein sequence, read N- to C-terminus: Large ribosomal subunit protein bL36 (37 aa).

It belongs to the bacterial ribosomal protein bL36 family.

This chain is Large ribosomal subunit protein bL36, found in Mycobacteroides abscessus (strain ATCC 19977 / DSM 44196 / CCUG 20993 / CIP 104536 / JCM 13569 / NCTC 13031 / TMC 1543 / L948) (Mycobacterium abscessus).